The sequence spans 1196 residues: Contactin rig-6 (1196 aa).

An N-terminal signal peptide occupies residues 1–19 (MMMLIRCISIFLLFGFVNA). Asn-100 and Asn-195 each carry an N-linked (GlcNAc...) asparagine glycan. Ig-like C2-type domains lie at 144–225 (PQIS…ARNS) and 232–319 (PPIL…CSLS). 2 disulfide bridges follow: Cys-169-Cys-220 and Cys-263-Cys-316. N-linked (GlcNAc...) asparagine glycosylation occurs at Asn-343. 4 Ig-like C2-type domains span residues 355 to 438 (PQIF…VKLR), 441 to 533 (PSIL…ALLT), 539 to 626 (PVFP…VQLI), and 631 to 730 (PSIK…EFVT). Cys-372 and Cys-420 form a disulfide bridge. N-linked (GlcNAc...) asparagine glycosylation is present at Asn-457. Disulfide bonds link Cys-462–Cys-517 and Cys-562–Cys-610. N-linked (GlcNAc...) asparagine glycosylation is present at Asn-644. Residues Cys-653 and Cys-718 are joined by a disulfide bond. Fibronectin type-III domains lie at 736-844 (SPIA…TAPG), 849-961 (TIDN…SHGE), 963-1057 (KKVS…TKQH), and 1064-1168 (LIGK…LGSP). Asn-895, Asn-925, Asn-945, Asn-974, Asn-979, Asn-986, Asn-1002, and Asn-1092 each carry an N-linked (GlcNAc...) asparagine glycan. Residues 1174–1194 (TTGSSDVPIPSLLLLLLLLLW) traverse the membrane as a helical segment. Ser-1177 carries the GPI-anchor amidated serine lipid modification. Positions 1178–1196 (SDVPIPSLLLLLLLLLWRL) are cleaved as a propeptide — removed in mature form.

Belongs to the immunoglobulin superfamily. Contactin family. In terms of assembly, interacts with sax-7; the interaction establishes synaptic connections between neurons. Expressed in neurons including the I1 and I3 pharyngeal interneurons, NSM and VNC motor neurons, HSN and CAN neurons, the ALM and PLM touch receptor neurons and other unidentified head neurons. Expressed in AVG interneurons. Also expressed in somatic muscles, the excretory canal, the excretory cell and the hypodermis.

The protein resides in the cell membrane. Its subcellular location is the perikaryon. It localises to the cell projection. It is found in the axon. The protein localises to the synapse. The protein resides in the cytoplasm. Probable cell adhesion protein involved in patterning of the nervous system, playing a role in ALM and PLM touch receptor axon growth and VNC axon navigation. By associating with the transmembrane protein sax-7, mediates axonal interactions to establish synaptic connections between the AVG interneuron and the two PHC sensory neurons. Also required for non-neuronal cell migration in the excretory canal, regulating excretory canal elongation and excretory cell morphogenesis. Plays a role in regulating male mating behavior. The protein is Contactin rig-6 of Caenorhabditis elegans.